The primary structure comprises 379 residues: Queuine tRNA-ribosyltransferase (379 aa).

Asp-94 acts as the Proton acceptor in catalysis. Substrate is bound by residues 94 to 98 (DSGGF), Asp-148, Gln-191, and Gly-218. Residues 249–255 (GVGSPDA) form an RNA binding region. Asp-268 serves as the catalytic Nucleophile. The RNA binding; important for wobble base 34 recognition stretch occupies residues 273 to 277 (TRIAR). Zn(2+) contacts are provided by Cys-306, Cys-308, Cys-311, and His-337.

This sequence belongs to the queuine tRNA-ribosyltransferase family. Homodimer. Within each dimer, one monomer is responsible for RNA recognition and catalysis, while the other monomer binds to the replacement base PreQ1. The cofactor is Zn(2+).

It catalyses the reaction 7-aminomethyl-7-carbaguanine + guanosine(34) in tRNA = 7-aminomethyl-7-carbaguanosine(34) in tRNA + guanine. The protein operates within tRNA modification; tRNA-queuosine biosynthesis. Its function is as follows. Catalyzes the base-exchange of a guanine (G) residue with the queuine precursor 7-aminomethyl-7-deazaguanine (PreQ1) at position 34 (anticodon wobble position) in tRNAs with GU(N) anticodons (tRNA-Asp, -Asn, -His and -Tyr). Catalysis occurs through a double-displacement mechanism. The nucleophile active site attacks the C1' of nucleotide 34 to detach the guanine base from the RNA, forming a covalent enzyme-RNA intermediate. The proton acceptor active site deprotonates the incoming PreQ1, allowing a nucleophilic attack on the C1' of the ribose to form the product. After dissociation, two additional enzymatic reactions on the tRNA convert PreQ1 to queuine (Q), resulting in the hypermodified nucleoside queuosine (7-(((4,5-cis-dihydroxy-2-cyclopenten-1-yl)amino)methyl)-7-deazaguanosine). The polypeptide is Queuine tRNA-ribosyltransferase (Staphylococcus aureus (strain Mu3 / ATCC 700698)).